The chain runs to 211 residues: Protein-L-isoaspartate O-methyltransferase (211 aa).

Residue Ser60 is part of the active site.

The protein belongs to the methyltransferase superfamily. L-isoaspartyl/D-aspartyl protein methyltransferase family.

The protein localises to the cytoplasm. It carries out the reaction [protein]-L-isoaspartate + S-adenosyl-L-methionine = [protein]-L-isoaspartate alpha-methyl ester + S-adenosyl-L-homocysteine. Catalyzes the methyl esterification of L-isoaspartyl residues in peptides and proteins that result from spontaneous decomposition of normal L-aspartyl and L-asparaginyl residues. It plays a role in the repair and/or degradation of damaged proteins. The polypeptide is Protein-L-isoaspartate O-methyltransferase (Pseudomonas fluorescens (strain SBW25)).